A 475-amino-acid polypeptide reads, in one-letter code: MKIIQTAVEFAPFIKAGGLGDAVYGLSKALSESHDVEVLLPFFPLITPSFSSQVIDEKVFSYEFLGRQHAHSISYSYEGMILTIIKLDSQLDLFSTSTIYTEDDTLRFSAFSAAAAAYIGELDHVDIVHMHDWHMGLLSGLLKEPNRPHYPKRIFTIHNFSYRGYCSTQLLGTSGISDFGLSNYQLYRDPQMSVLLKGALYCSDYITTVSPTYAQEILNDYSDYEMHDAIMARRHVFCGILNGIDEQIWNPETDASLAVNYSKDLLDAPDVLFTKKEENKNALYEKLGLSYEYSPLMCIISRIVEQKGPEFMKAAILHAMENGYALVIVGTCYDPEIQRKFTNLQESLTTSPNIRIILDYNDPLARLVYGAADMICIPSHFEPCGLTQLIGMRYGTVPLVRSTGGLADTVVTGINGFTFSQTDNFNDFLHMLTLAITTYRQEPDIWFQLVEEGMLRSSGLTTMAIHYLGVYNSLL.

Position 15 (lysine 15) interacts with ADP-alpha-D-glucose.

This sequence belongs to the glycosyltransferase 1 family. Bacterial/plant glycogen synthase subfamily.

The enzyme catalyses [(1-&gt;4)-alpha-D-glucosyl](n) + ADP-alpha-D-glucose = [(1-&gt;4)-alpha-D-glucosyl](n+1) + ADP + H(+). Its pathway is glycan biosynthesis; glycogen biosynthesis. Its function is as follows. Synthesizes alpha-1,4-glucan chains using ADP-glucose. In Chlamydia caviae (strain ATCC VR-813 / DSM 19441 / 03DC25 / GPIC) (Chlamydophila caviae), this protein is Glycogen synthase.